A 326-amino-acid polypeptide reads, in one-letter code: Nicotianamine synthase 2 (326 aa).

Belongs to the nicotianamine synthase (NAS)-like family. As to expression, expressed in roots.

It catalyses the reaction 3 S-adenosyl-L-methionine = nicotianamine + 3 S-methyl-5'-thioadenosine + 3 H(+). Synthesizes nicotianamine, a polyamine that is the first intermediate in the synthesis of the phytosiderophores of the mugineic acid type found in gramineae which serve as a sensor for the physiological iron status within the plant, and/or might be involved in the transport of iron. The polypeptide is Nicotianamine synthase 2 (NAS2) (Oryza sativa subsp. japonica (Rice)).